The sequence spans 219 residues: Dynein light chain Tctex-type 4 (219 aa).

The segment at 1-84 (MACRTLPSRR…RRPSLGPVPP (84 aa)) is disordered. Residues 9 to 20 (RRQEEETTKDLA) are compositionally biased toward basic and acidic residues. Phosphoserine is present on Ser-64.

This sequence belongs to the dynein light chain Tctex-type family. As to quaternary structure, interacts with ENG/endoglin, TGFBR2 and TGFBR3. Interacts with PPP1CC.

The protein resides in the cell projection. Its subcellular location is the cilium. It localises to the flagellum. It is found in the cytoplasmic vesicle. The protein localises to the secretory vesicle. The protein resides in the acrosome. Its subcellular location is the cytoplasm. It localises to the cytoskeleton. It is found in the cilium axoneme. The protein localises to the nucleus. The protein resides in the microtubule organizing center. This chain is Dynein light chain Tctex-type 4 (Dynlt4), found in Mus musculus (Mouse).